A 362-amino-acid polypeptide reads, in one-letter code: MIKNRKLDITSTNVAGIGTDLDKKCRLDAASTEAQWKGVGQAPGLKIWRIENFKVVPVPESSYGKFYDGDSYIILHTFKEGNSLKHDIHFFLGTFTTQDEAGTAAYKTVELDDFLGGAPIQYRQCQSYESPSFLSLFPKYFILSGGVESGFNHVKPTEYKPRLLHISGDKNAKVAEVPLATSSLNSGDCFLLDAGLTIYQFNGSKSSPQEKNKAAEVARAIDAERKGLPKVEVFCETDSDIPAEFWKLLGGKGAIAAKHETAPTKSEKVLYKLSDASGSLKFSEVSRGKINKSSLKSEDVFIIDLGNEIYTWIGSKSSPNEKKTAFSHATQYLVNNKRCEYTPIVRVLENGTNQSFETLLSA.

The Gelsolin-like 1 repeat unit spans residues 53-102 (FKVVPVPESSYGKFYDGDSYIILHTFKEGNSLKHDIHFFLGTFTTQDEAG). 162–170 (RLLHISGDK) serves as a coordination point for a 1,2-diacyl-sn-glycero-3-phospho-(1D-myo-inositol-4,5-bisphosphate). Gelsolin-like repeat units lie at residues 172–212 (AKVA…QEKN) and 280–323 (LKFS…NEKK).

It belongs to the villin/gelsolin family.

Functionally, severin blocks the ends of F-actin and causes the fragmentation and depolymerization of actin filaments in a Ca(2+) dependent manner. The chain is Severin (sevA) from Dictyostelium discoideum (Social amoeba).